The chain runs to 834 residues: DNA polymerase I, thermostable (834 aa).

The region spanning 176–262 is the 5'-3' exonuclease domain; the sequence is RPEQWVDFRA…DLPLEVDLAQ (87 aa). The segment at 412–834 is polymerase; it reads ERLHRNLLKR…MGEDWLSAKG (423 aa).

Belongs to the DNA polymerase type-A family.

The enzyme catalyses DNA(n) + a 2'-deoxyribonucleoside 5'-triphosphate = DNA(n+1) + diphosphate. In addition to polymerase activity, this DNA polymerase exhibits 5'-3' exonuclease activity. The protein is DNA polymerase I, thermostable (polA) of Thermus thermophilus (strain ATCC 27634 / DSM 579 / HB8).